The chain runs to 325 residues: Glutarate 2-hydroxylase (325 aa).

3 residues coordinate Fe cation: H160, D162, and H292.

Belongs to the glutarate hydroxylase family. In terms of assembly, homotetramer. It depends on Fe(2+) as a cofactor.

It catalyses the reaction glutarate + 2-oxoglutarate + O2 = (S)-2-hydroxyglutarate + succinate + CO2. It participates in amino-acid degradation. Acts as an alpha-ketoglutarate-dependent dioxygenase catalyzing hydroxylation of glutarate (GA) to L-2-hydroxyglutarate (L2HG). Functions in a L-lysine degradation pathway that proceeds via cadaverine, glutarate and L-2-hydroxyglutarate. The protein is Glutarate 2-hydroxylase of Klebsiella pneumoniae (strain 342).